A 229-amino-acid polypeptide reads, in one-letter code: Histone H1 (229 aa).

Disordered stretches follow at residues 1–52 and 125–229; these read MADT…SSHP and APAL…RTRK. The span at 32–45 shows a compositional bias: basic residues; that stretch reads KEKKKVIAAKKPKS. Positions 50-119 constitute an H15 domain; it reads SHPSFFEMIS…KVKNSFKLPS (70 aa). Positions 125–138 are enriched in low complexity; the sequence is APALAKKPTIPKPK. Basic residues predominate over residues 139–160; sequence VAAKPKTAKIGAKPKAKAKVAA. Composition is skewed to low complexity over residues 161–177 and 185–205; these read KTKATTKTVAKKIPAAK and KPKTVAAKPAKVAKTAAVASP. Residues 206-229 are compositionally biased toward basic residues; that stretch reads GKKKAVPVKKVKTVKSPAGKRTRK.

Belongs to the histone H1/H5 family.

It localises to the nucleus. The protein resides in the chromosome. Functionally, histones H1 are necessary for the condensation of nucleosome chains into higher-order structures. The polypeptide is Histone H1 (Euphorbia esula (Leafy spurge)).